The following is a 159-amino-acid chain: MEQKKLAIIATKGSLDWAYPPFILASTAAALGYEVQVFFTFYGLQLLKKKPNLEVTPLGNPGMPMPMGMDKWFPVLGLALPGMQGMMTAMMKQKMKSKGVASIEELRELCQEAEVKMIACQMTVDLFDMPKAEFIDGVEYAGAAAFFEFAGESDICLYI.

A run of 2 helical transmembrane segments spans residues Pro-21–Gly-43 and Trp-72–Met-91.

The protein resides in the cell membrane. It participates in energy metabolism; sulfur metabolism. Its function is as follows. Sulfur carrier protein probably involved in sulfur trafficking for oxidative dissimilatory sulfur metabolism. May be a component of a cytoplasmic sulfur relay system delivering sulfur to DsrC. Binds sulfur in the presence of sulfide in vitro. The chain is Sulfur carrier protein DsrE2 from Allochromatium vinosum (strain ATCC 17899 / DSM 180 / NBRC 103801 / NCIMB 10441 / D) (Chromatium vinosum).